The following is a 232-amino-acid chain: LexA repressor (232 aa).

The segment at 1–25 (MSDDSSDSTDAPGTSRSRDSGLTER) is disordered. The span at 16–25 (RSRDSGLTER) shows a compositional bias: basic and acidic residues. Residues 46 to 66 (IREIGDAVGLTSTSSVAHQLR) constitute a DNA-binding region (H-T-H motif). Catalysis depends on for autocatalytic cleavage activity residues Ser-156 and Lys-193.

This sequence belongs to the peptidase S24 family. Homodimer.

It catalyses the reaction Hydrolysis of Ala-|-Gly bond in repressor LexA.. Functionally, represses a number of genes involved in the response to DNA damage (SOS response), including recA and lexA. In the presence of single-stranded DNA, RecA interacts with LexA causing an autocatalytic cleavage which disrupts the DNA-binding part of LexA, leading to derepression of the SOS regulon and eventually DNA repair. The protein is LexA repressor of Mycolicibacterium gilvum (strain PYR-GCK) (Mycobacterium gilvum (strain PYR-GCK)).